The following is a 276-amino-acid chain: 2-dehydro-3-deoxyphosphooctonate aldolase (276 aa).

Belongs to the KdsA family.

It is found in the cytoplasm. The catalysed reaction is D-arabinose 5-phosphate + phosphoenolpyruvate + H2O = 3-deoxy-alpha-D-manno-2-octulosonate-8-phosphate + phosphate. It functions in the pathway carbohydrate biosynthesis; 3-deoxy-D-manno-octulosonate biosynthesis; 3-deoxy-D-manno-octulosonate from D-ribulose 5-phosphate: step 2/3. It participates in bacterial outer membrane biogenesis; lipopolysaccharide biosynthesis. This Helicobacter acinonychis (strain Sheeba) protein is 2-dehydro-3-deoxyphosphooctonate aldolase.